Consider the following 173-residue polypeptide: MPSSNNKDNFLDKAFTVIAEGIVKMMPIAAKEKQAYIYYREGFAAQNNGDYSEALENYEESLKLEENAIDRGETLKNMAIIYMSNGDEDKALDTYQKALEQNPKQPSCLKNMGLIYEKRGRALQQNGKQDESDIWFDKAAEVWTKAVRLYPGGYLDIENWLKTTGRSKVDIYL.

TPR repeat units lie at residues Ala-35–Ala-68, Gly-72–Gln-105, and Gly-120–Gly-153.

Belongs to the Ycf3 family.

Its subcellular location is the cellular thylakoid membrane. Its function is as follows. Essential for the assembly of the photosystem I (PSI) complex. May act as a chaperone-like factor to guide the assembly of the PSI subunits. This chain is Photosystem I assembly protein Ycf3, found in Prochlorococcus marinus (strain SARG / CCMP1375 / SS120).